We begin with the raw amino-acid sequence, 360 residues long: Uptake hydrogenase small subunit (360 aa).

A signal peptide (tat-type signal) is located at residues 1–43 (MVETFYEVMRRQGISRRSFLKYCSLTATSLGLGPSFLPQIAHA). 8 residues coordinate [4Fe-4S] cluster: cysteine 60, cysteine 63, cysteine 158, cysteine 192, histidine 230, cysteine 233, cysteine 258, and cysteine 264. Residues cysteine 273, cysteine 292, and cysteine 295 each contribute to the [3Fe-4S] cluster site.

Belongs to the [NiFe]/[NiFeSe] hydrogenase small subunit family. As to quaternary structure, heterodimer of a large and a small subunit. [4Fe-4S] cluster is required as a cofactor. The cofactor is [3Fe-4S] cluster. In terms of processing, predicted to be exported by the Tat system. The position of the signal peptide cleavage has been experimentally proven.

It is found in the cell membrane. The enzyme catalyses H2 + A = AH2. Functionally, this enzyme recycles the H(2) produced by nitrogenase to increase the production of ATP and to protect nitrogenase against inhibition or damage by O(2) under carbon- or phosphate-limited conditions. This chain is Uptake hydrogenase small subunit (hoxK), found in Cupriavidus necator (strain ATCC 17699 / DSM 428 / KCTC 22496 / NCIMB 10442 / H16 / Stanier 337) (Ralstonia eutropha).